The chain runs to 188 residues: Probable nicotinate-nucleotide adenylyltransferase (188 aa).

It belongs to the NadD family.

It catalyses the reaction nicotinate beta-D-ribonucleotide + ATP + H(+) = deamido-NAD(+) + diphosphate. It participates in cofactor biosynthesis; NAD(+) biosynthesis; deamido-NAD(+) from nicotinate D-ribonucleotide: step 1/1. Catalyzes the reversible adenylation of nicotinate mononucleotide (NaMN) to nicotinic acid adenine dinucleotide (NaAD). In Sulfurovum sp. (strain NBC37-1), this protein is Probable nicotinate-nucleotide adenylyltransferase.